The primary structure comprises 319 residues: Guanidinobutyrase (319 aa).

His129, Asp152, His154, Asp156, Asp243, and Asp245 together coordinate Mn(2+).

Belongs to the arginase family. Agmatinase subfamily. As to quaternary structure, homohexamer. Requires Mn(2+) as cofactor.

It carries out the reaction 4-guanidinobutanoate + H2O = urea + 4-aminobutanoate. In terms of biological role, catalyzes specifically the hydrolysis of 4-guanidinobutanoate to 4-aminobutanoate and urea. Has no activity against arginine, agmatine, 3-guanidinopropionate and guanidinoacetate. In Pseudomonas aeruginosa (strain ATCC 15692 / DSM 22644 / CIP 104116 / JCM 14847 / LMG 12228 / 1C / PRS 101 / PAO1), this protein is Guanidinobutyrase (gbuA).